We begin with the raw amino-acid sequence, 84 residues long: ATP synthase subunit c (84 aa).

Transmembrane regions (helical) follow at residues 9 to 29 (IIGA…GFAI) and 54 to 74 (IVAG…LLFI).

It belongs to the ATPase C chain family. As to quaternary structure, F-type ATPases have 2 components, F(1) - the catalytic core - and F(0) - the membrane proton channel. F(1) has five subunits: alpha(3), beta(3), gamma(1), delta(1), epsilon(1). F(0) has three main subunits: a(1), b(2) and c(10-14). The alpha and beta chains form an alternating ring which encloses part of the gamma chain. F(1) is attached to F(0) by a central stalk formed by the gamma and epsilon chains, while a peripheral stalk is formed by the delta and b chains.

It localises to the cell inner membrane. Functionally, f(1)F(0) ATP synthase produces ATP from ADP in the presence of a proton or sodium gradient. F-type ATPases consist of two structural domains, F(1) containing the extramembraneous catalytic core and F(0) containing the membrane proton channel, linked together by a central stalk and a peripheral stalk. During catalysis, ATP synthesis in the catalytic domain of F(1) is coupled via a rotary mechanism of the central stalk subunits to proton translocation. Key component of the F(0) channel; it plays a direct role in translocation across the membrane. A homomeric c-ring of between 10-14 subunits forms the central stalk rotor element with the F(1) delta and epsilon subunits. The protein is ATP synthase subunit c of Haemophilus influenzae (strain PittEE).